The primary structure comprises 61 residues: Small ribosomal subunit protein uS14 (61 aa).

Zn(2+)-binding residues include Cys-24, Cys-27, Cys-40, and Cys-43.

Belongs to the universal ribosomal protein uS14 family. Zinc-binding uS14 subfamily. In terms of assembly, part of the 30S ribosomal subunit. Contacts proteins S3 and S10. The cofactor is Zn(2+).

In terms of biological role, binds 16S rRNA, required for the assembly of 30S particles and may also be responsible for determining the conformation of the 16S rRNA at the A site. This chain is Small ribosomal subunit protein uS14, found in Streptococcus mutans serotype c (strain ATCC 700610 / UA159).